A 283-amino-acid chain; its full sequence is CDP-abequose synthase (283 aa).

NAD(+) is bound by residues Gly7–Gly13, Glu48–Phe49, Tyr129, and Lys133. The Proton acceptor role is filled by Tyr129.

The protein belongs to the NAD(P)-dependent epimerase/dehydratase family.

The catalysed reaction is CDP-alpha-D-abequose + NADP(+) = CDP-4-dehydro-3,6-dideoxy-alpha-D-glucose + NADPH + H(+). The protein operates within bacterial outer membrane biogenesis; LPS O-antigen biosynthesis. Its function is as follows. The CDP-abequose synthase is involved in lipopolysaccharides (LPS) synthesis containing abequose which are important antigens of the cell surface responsible for the serological O specificity. Derivatives of the 3,6-dideoxyhexose group have a particular highly immunogenic character. The polypeptide is CDP-abequose synthase (rfbJ) (Yersinia pseudotuberculosis).